Consider the following 535-residue polypeptide: SIR4-interacting protein SIF2 (535 aa).

One can recognise a LisH domain in the interval 4 to 36 (TSEELNYLIWRYCQEMGHEVSALALQDETRVLE). A disordered region spans residues 104-140 (EGRFTLETNSESNKAGEDGASTVERETQEDDTNSIDS). Positions 130-140 (TQEDDTNSIDS) are enriched in acidic residues. Serine 137 carries the post-translational modification Phosphoserine. WD repeat units follow at residues 155-186 (VKLDNIVSSTWNPLDESILAYGEKNSVARLAR), 218-248 (KTTNQVTCLAWSHDGNSIVTGVENGELRLWN), 259-289 (FHRAPIVSVKWNKDGTHIISMDVENVTILWN), 316-345 (GDGSLGVDVEWVDDDKFVIPGPKGAIFVYQ), 357-387 (GHHGPISVLEFNDTNKLLLSASDDGTLRIWH), 399-428 (GHSQSIVSASWVGDDKVISCSMDGSVRLWS), 440-470 (VDGVPIFAGRISQDGQKYAVAFMDGQVNVYD), and 503-534 (SQDNDYIFDLSWNCAGNKISVAYSLQEGSVVA).

As to quaternary structure, homotetramer. Interacts with SIR4 N-terminal domain. Interacts with a complex composed of SIN3 and RPD3. Identified in the Set3C complex with HOS2, HST1, SNT1, CPR1, HOS4/YIL112W and SET3.

It localises to the nucleus. Antagonizes telomeric silencing in yeast. May recruit SIR4 to non-telomeric sites or repression. This chain is SIR4-interacting protein SIF2 (SIF2), found in Saccharomyces cerevisiae (strain ATCC 204508 / S288c) (Baker's yeast).